The chain runs to 347 residues: Protein RecA (347 aa).

Residue 65 to 72 participates in ATP binding; it reads GPESSGKT. The disordered stretch occupies residues 325–347; sequence KLGISDGDVEETEDAPKSLFDEE. The span at 338–347 shows a compositional bias: basic and acidic residues; sequence DAPKSLFDEE.

This sequence belongs to the RecA family.

Its subcellular location is the cytoplasm. Functionally, can catalyze the hydrolysis of ATP in the presence of single-stranded DNA, the ATP-dependent uptake of single-stranded DNA by duplex DNA, and the ATP-dependent hybridization of homologous single-stranded DNAs. It interacts with LexA causing its activation and leading to its autocatalytic cleavage. This chain is Protein RecA, found in Staphylococcus aureus (strain Mu3 / ATCC 700698).